A 114-amino-acid chain; its full sequence is Large ribosomal subunit protein bL20 (114 aa).

It belongs to the bacterial ribosomal protein bL20 family.

In terms of biological role, binds directly to 23S ribosomal RNA and is necessary for the in vitro assembly process of the 50S ribosomal subunit. It is not involved in the protein synthesizing functions of that subunit. This chain is Large ribosomal subunit protein bL20, found in Anaeromyxobacter dehalogenans (strain 2CP-C).